Consider the following 331-residue polypeptide: DNA-directed RNA polymerase subunit alpha (331 aa).

The interval 1–235 is alpha N-terminal domain (alpha-NTD); it reads MTMHIRWRGM…KHLNPFVQYR (235 aa). Residues 255–331 are alpha C-terminal domain (alpha-CTD); the sequence is QLEAKLNMTL…GMRVPNQPLF (77 aa).

This sequence belongs to the RNA polymerase alpha chain family. Homodimer. The RNAP catalytic core consists of 2 alpha, 1 beta, 1 beta' and 1 omega subunit. When a sigma factor is associated with the core the holoenzyme is formed, which can initiate transcription.

The catalysed reaction is RNA(n) + a ribonucleoside 5'-triphosphate = RNA(n+1) + diphosphate. Functionally, DNA-dependent RNA polymerase catalyzes the transcription of DNA into RNA using the four ribonucleoside triphosphates as substrates. In Rhodopirellula baltica (strain DSM 10527 / NCIMB 13988 / SH1), this protein is DNA-directed RNA polymerase subunit alpha.